The following is a 117-amino-acid chain: Immunoglobulin kappa variable 1-27 (117 aa).

A signal peptide spans 1–22 (MDMRVPAQLLGLLLLWLPDTRC). The interval 23-45 (DIQMTQSPSSLSASVGDRVTITC) is framework-1. Residues 23–117 (DIQMTQSPSS…YYCQKYNSAP (95 aa)) form the Ig-like domain. Cys45 and Cys110 form a disulfide bridge. The tract at residues 46–56 (RASQGISNYLA) is complementarity-determining-1. The segment at 57 to 71 (WYQQKPGKVPKLLIY) is framework-2. The interval 72-78 (AASTLQS) is complementarity-determining-2. The segment at 79–110 (GVPSRFSGSGSGTDFTLTISSLQPEDVATYYC) is framework-3. A complementarity-determining-3 region spans residues 111–117 (QKYNSAP).

In terms of assembly, immunoglobulins are composed of two identical heavy chains and two identical light chains; disulfide-linked.

The protein localises to the secreted. It localises to the cell membrane. Functionally, v region of the variable domain of immunoglobulin light chains that participates in the antigen recognition. Immunoglobulins, also known as antibodies, are membrane-bound or secreted glycoproteins produced by B lymphocytes. In the recognition phase of humoral immunity, the membrane-bound immunoglobulins serve as receptors which, upon binding of a specific antigen, trigger the clonal expansion and differentiation of B lymphocytes into immunoglobulins-secreting plasma cells. Secreted immunoglobulins mediate the effector phase of humoral immunity, which results in the elimination of bound antigens. The antigen binding site is formed by the variable domain of one heavy chain, together with that of its associated light chain. Thus, each immunoglobulin has two antigen binding sites with remarkable affinity for a particular antigen. The variable domains are assembled by a process called V-(D)-J rearrangement and can then be subjected to somatic hypermutations which, after exposure to antigen and selection, allow affinity maturation for a particular antigen. This chain is Immunoglobulin kappa variable 1-27, found in Homo sapiens (Human).